We begin with the raw amino-acid sequence, 208 residues long: Small ribosomal subunit protein bS6 (208 aa).

2 disordered regions span residues 121–143 and 185–208; these read SENN…KPRL and NQQT…GAKP. A compositionally biased stretch (low complexity) spans 185–195; it reads NQQTSQANNNQ.

Belongs to the bacterial ribosomal protein bS6 family.

Binds together with bS18 to 16S ribosomal RNA. This is Small ribosomal subunit protein bS6 (rpsF) from Mycoplasma genitalium (strain ATCC 33530 / DSM 19775 / NCTC 10195 / G37) (Mycoplasmoides genitalium).